The following is a 156-amino-acid chain: MKVTLCVVGRLRAGPERDLINDYLQRFDRTGRGLGLGPASVVEVEDRKGGGKAAEADLLRKAVPRGAVICALDERGKTMSSPQFADSLAGWRDAGRSDLAFLIGGADGLDKALRAQAEARLSFGAMVWPHMLARVMLAEQLYRAAAILAGTPYHRV.

S-adenosyl-L-methionine contacts are provided by residues Leu72, Gly104, and 123–128 (FGAMVW).

It belongs to the RNA methyltransferase RlmH family. As to quaternary structure, homodimer.

It localises to the cytoplasm. It carries out the reaction pseudouridine(1915) in 23S rRNA + S-adenosyl-L-methionine = N(3)-methylpseudouridine(1915) in 23S rRNA + S-adenosyl-L-homocysteine + H(+). Functionally, specifically methylates the pseudouridine at position 1915 (m3Psi1915) in 23S rRNA. This Dinoroseobacter shibae (strain DSM 16493 / NCIMB 14021 / DFL 12) protein is Ribosomal RNA large subunit methyltransferase H.